A 292-amino-acid polypeptide reads, in one-letter code: 4-hydroxy-tetrahydrodipicolinate synthase (292 aa).

Thr-44 is a binding site for pyruvate. The active-site Proton donor/acceptor is the Tyr-132. The active-site Schiff-base intermediate with substrate is Lys-161. Residue Ile-203 coordinates pyruvate.

This sequence belongs to the DapA family. In terms of assembly, homotetramer; dimer of dimers.

It is found in the cytoplasm. The catalysed reaction is L-aspartate 4-semialdehyde + pyruvate = (2S,4S)-4-hydroxy-2,3,4,5-tetrahydrodipicolinate + H2O + H(+). The protein operates within amino-acid biosynthesis; L-lysine biosynthesis via DAP pathway; (S)-tetrahydrodipicolinate from L-aspartate: step 3/4. Catalyzes the condensation of (S)-aspartate-beta-semialdehyde [(S)-ASA] and pyruvate to 4-hydroxy-tetrahydrodipicolinate (HTPA). In Fervidobacterium nodosum (strain ATCC 35602 / DSM 5306 / Rt17-B1), this protein is 4-hydroxy-tetrahydrodipicolinate synthase.